Reading from the N-terminus, the 21-residue chain is Pedibin (21 aa).

A disordered region spans residues 1-21; the sequence is AGEDVSHELEEKEKALANHSE.

Its function is as follows. Morphogenetically active peptide. Active in foot development. In Hydra vulgaris (Hydra), this protein is Pedibin.